Here is a 338-residue protein sequence, read N- to C-terminus: RNA 3'-terminal phosphate cyclase (338 aa).

ATP-binding positions include Gln-103 and Tyr-283–Gln-287. Catalysis depends on His-308, which acts as the Tele-AMP-histidine intermediate.

This sequence belongs to the RNA 3'-terminal cyclase family. Type 1 subfamily.

The protein localises to the cytoplasm. It catalyses the reaction a 3'-end 3'-phospho-ribonucleotide-RNA + ATP = a 3'-end 2',3'-cyclophospho-ribonucleotide-RNA + AMP + diphosphate. Its function is as follows. Catalyzes the conversion of 3'-phosphate to a 2',3'-cyclic phosphodiester at the end of RNA. The mechanism of action of the enzyme occurs in 3 steps: (A) adenylation of the enzyme by ATP; (B) transfer of adenylate to an RNA-N3'P to produce RNA-N3'PP5'A; (C) and attack of the adjacent 2'-hydroxyl on the 3'-phosphorus in the diester linkage to produce the cyclic end product. The biological role of this enzyme is unknown but it is likely to function in some aspects of cellular RNA processing. This Escherichia coli O45:K1 (strain S88 / ExPEC) protein is RNA 3'-terminal phosphate cyclase.